Reading from the N-terminus, the 303-residue chain is Coenzyme PQQ synthesis protein B (303 aa).

The protein belongs to the PqqB family.

It functions in the pathway cofactor biosynthesis; pyrroloquinoline quinone biosynthesis. Functionally, may be involved in the transport of PQQ or its precursor to the periplasm. In Pseudomonas putida (strain W619), this protein is Coenzyme PQQ synthesis protein B.